Consider the following 688-residue polypeptide: UvrABC system protein B (688 aa).

The 389-residue stretch at 41-429 folds into the Helicase ATP-binding domain; that stretch reads ANFEAGLAKQ…AGEVTELVVR (389 aa). Position 54-61 (54-61) interacts with ATP; sequence GVTGSGKT. The Beta-hairpin motif lies at 107 to 130; sequence YYDYYQPEAYVPSSDTFIEKDSSI. One can recognise a Helicase C-terminal domain in the interval 446–612; sequence QVDDLMSEIH…SVERPISDIM (167 aa). The disordered stretch occupies residues 616-646; the sequence is REDAAEKKSGKGRSKSRQVAEETPDYRAMKP. Positions 633–645 are enriched in basic and acidic residues; it reads QVAEETPDYRAMK. A UVR domain is found at 650–685; the sequence is AGKLKSLEQKMYQHAKDLEFEAAAQIRDQIQKLKTA.

This sequence belongs to the UvrB family. As to quaternary structure, forms a heterotetramer with UvrA during the search for lesions. Interacts with UvrC in an incision complex.

The protein localises to the cytoplasm. Functionally, the UvrABC repair system catalyzes the recognition and processing of DNA lesions. A damage recognition complex composed of 2 UvrA and 2 UvrB subunits scans DNA for abnormalities. Upon binding of the UvrA(2)B(2) complex to a putative damaged site, the DNA wraps around one UvrB monomer. DNA wrap is dependent on ATP binding by UvrB and probably causes local melting of the DNA helix, facilitating insertion of UvrB beta-hairpin between the DNA strands. Then UvrB probes one DNA strand for the presence of a lesion. If a lesion is found the UvrA subunits dissociate and the UvrB-DNA preincision complex is formed. This complex is subsequently bound by UvrC and the second UvrB is released. If no lesion is found, the DNA wraps around the other UvrB subunit that will check the other stand for damage. The protein is UvrABC system protein B of Xanthomonas oryzae pv. oryzae (strain KACC10331 / KXO85).